We begin with the raw amino-acid sequence, 208 residues long: Uracil phosphoribosyltransferase (208 aa).

Residues R78, R103, and 130–138 contribute to the 5-phospho-alpha-D-ribose 1-diphosphate site; that span reads DPMLATGGS. Uracil is bound by residues I193 and 198–200; that span reads GDA. D199 contacts 5-phospho-alpha-D-ribose 1-diphosphate.

The protein belongs to the UPRTase family. Mg(2+) is required as a cofactor.

The catalysed reaction is UMP + diphosphate = 5-phospho-alpha-D-ribose 1-diphosphate + uracil. Its pathway is pyrimidine metabolism; UMP biosynthesis via salvage pathway; UMP from uracil: step 1/1. With respect to regulation, allosterically activated by GTP. In terms of biological role, catalyzes the conversion of uracil and 5-phospho-alpha-D-ribose 1-diphosphate (PRPP) to UMP and diphosphate. The chain is Uracil phosphoribosyltransferase from Pelobacter propionicus (strain DSM 2379 / NBRC 103807 / OttBd1).